The chain runs to 408 residues: Bone morphogenetic protein 4 (408 aa).

The first 19 residues, 1–19 (MIPGNRMLMVVLLCQVLLG), serve as a signal peptide directing secretion. The propeptide occupies 20 to 292 (GASHASLIPE…HTLTRRRAKR (273 aa)). A Phosphoserine modification is found at serine 91. The tract at residues 91-111 (SGEEEEEEQSQGTGLEYPERP) is disordered. N-linked (GlcNAc...) asparagine glycans are attached at residues asparagine 144 and asparagine 209. A disordered region spans residues 281-307 (RGHTLTRRRAKRSPKHHPQRSRKKNKN). Basic residues predominate over residues 284 to 307 (TLTRRRAKRSPKHHPQRSRKKNKN). 3 disulfides stabilise this stretch: cysteine 308–cysteine 373, cysteine 337–cysteine 405, and cysteine 341–cysteine 407. N-linked (GlcNAc...) asparagine glycosylation is found at asparagine 350 and asparagine 365.

The protein belongs to the TGF-beta family. As to quaternary structure, homodimer; disulfide-linked. Interacts with SOSTDC1, GREM2, RGMA, RGMB and RGMC. Part of a complex consisting of TWSG1 and CHRD. Interacts with the serine proteases, HTRA1 and HTRA3; the interaction with either inhibits BMP4-mediated signaling. The HTRA protease activity is required for this inhibition. Interacts with FBN1 (via N-terminal domain) and FBN2. Interacts with type I receptor BMPR1A. Interacts with type II receptor BMPR2. Interacts with FSTL1; this interaction inhibits the activation of the BMP4/Smad1/5/8 signaling pathway. Interacts with SCUBE3. Interacts with TGFBR3. In the cochlea, detected in nonprosensory regions and outer sulcus (at protein level). Prior to gastrulation, expressed in the extraembryonic ectoderm. Later, expressed in the extraembryonic mesoderm.

Its subcellular location is the secreted. The protein resides in the extracellular space. The protein localises to the extracellular matrix. Growth factor of the TGF-beta superfamily that plays essential roles in many developmental processes, including neurogenesis, vascular development, angiogenesis and osteogenesis. Acts in concert with PTHLH/PTHRP to stimulate ductal outgrowth during embryonic mammary development and to inhibit hair follicle induction. Initiates the canonical BMP signaling cascade by associating with type I receptor BMPR1A and type II receptor BMPR2. Once all three components are bound together in a complex at the cell surface, BMPR2 phosphorylates and activates BMPR1A. In turn, BMPR1A propagates signal by phosphorylating SMAD1/5/8 that travel to the nucleus and act as activators and repressors of transcription of target genes. Positively regulates the expression of odontogenic development regulator MSX1 via inducing the IPO7-mediated import of SMAD1 to the nucleus. Required for MSX1-mediated mesenchymal molar tooth bud development beyond the bud stage, via promoting Wnt signaling. Acts as a positive regulator of odontoblast differentiation during mesenchymal tooth germ formation, expression is repressed during the bell stage by MSX1-mediated inhibition of CTNNB1 signaling. Able to induce its own expression in dental mesenchymal cells and also in the neighboring dental epithelial cells via an MSX1-mediated pathway. Can also signal through non-canonical BMP pathways such as ERK/MAP kinase, PI3K/Akt or SRC cascades. For example, induces SRC phosphorylation which, in turn, activates VEGFR2, leading to an angiogenic response. In Mus musculus (Mouse), this protein is Bone morphogenetic protein 4.